Here is a 470-residue protein sequence, read N- to C-terminus: Arginine ADP-riboxanase OspC1 (470 aa).

Positions 138, 139, 140, 144, 157, 167, 183, 201, 206, 226, and 320 each coordinate NAD(+). Glutamate 320 is a catalytic residue. ANK repeat units follow at residues 363–392 (IALQALFLSITNQKEDVALYILSNFEITRQ), 399–431 (HELYDIEYLLSAHNSSCKVLEYFINKGLVDVNT), and 438–467 (SGDCMLDNAIKYENAEMIKLLLKYGATSDN).

Belongs to the OspC family. As to quaternary structure, interacts with host calmodulin (CALM1, CALM2 and/or CALM3); specifically interacts with the apo form of calmodulin, preventing calcium-binding.

It localises to the secreted. Its subcellular location is the host nucleus. The catalysed reaction is L-arginyl-[protein] + NAD(+) = ADP-riboxanated L-argininyl-[protein] + nicotinamide + NH4(+) + H(+). ADP-riboxanase effector that mediates arginine ADP-riboxanation of host caspases. ADP-riboxanation of host apoptotic caspases (CASP3, CASP8 and CASP9) prevents their activation, thereby inhibiting host cell extrinsic and intrinsic apoptosis. Does not catalyze ADP-riboxanation of host CASP4/CASP11. Independently of its ADP-riboxanase activity, acts as an inhibitor of calcium signaling by inhibiting host calmodulin, preventing activation of the JAK-STAT signaling pathway in response to interferon-beta. Mechanistically, acts by binding to the apo form of calmodulin, preventing calcium-binding and ability to activate host CaMK2 (CAMKII), which is required to stimulate the JAK-STAT signaling pathway in response to interferon-beta. The polypeptide is Arginine ADP-riboxanase OspC1 (Shigella flexneri).